Reading from the N-terminus, the 500-residue chain is Mucin-like protein 3 (500 aa).

An N-terminal signal peptide occupies residues 1 to 27 (MAQPTSGLYSTFGFFICLLFFPASWEA). Topologically, residues 28–429 (GANTFQELQK…GENNSFPVWA (402 aa)) are extracellular. Disordered stretches follow at residues 55–198 (THRA…SQKP) and 275–324 (EGKT…PTAS). Residues 58–71 (ASSDQKTSRQHPPD) are compositionally biased toward basic and acidic residues. Over residues 76-89 (TATQKAKNQCNTTR) the composition is skewed to polar residues. N-linked (GlcNAc...) asparagine glycosylation is present at asparagine 108. 2 stretches are compositionally biased toward basic and acidic residues: residues 111-123 (VRHE…EKDL) and 132-142 (ARNERSADDPR). Residue asparagine 148 is glycosylated (N-linked (GlcNAc...) asparagine). Polar residues-rich tracts occupy residues 159 to 178 (PRRN…TTKS), 279 to 289 (SPASESSSQAQ), and 298 to 324 (TSAS…PTAS). Residues 430 to 450 (IVIVILMAVIILLVFIGLILL) traverse the membrane as a helical segment. At 451–500 (VSCASRARHVLTQNSEEPEPQPEDKGSRNSYPVYLMEQQNLNLNQIPSPP) the chain is on the cytoplasmic side.

It localises to the cell membrane. Its subcellular location is the cytoplasm. Functionally, may modulate NF-kappaB signaling and play a role in cell growth. The polypeptide is Mucin-like protein 3 (Mus musculus (Mouse)).